Reading from the N-terminus, the 273-residue chain is Large ribosomal subunit protein uL2cz/uL2cy (273 aa).

Disordered stretches follow at residues 1 to 22 and 225 to 273; these read MAKH…DRQV and PVDH…RRRK.

This sequence belongs to the universal ribosomal protein uL2 family. In terms of assembly, part of the 50S ribosomal subunit.

The protein localises to the plastid. The protein resides in the chloroplast. This chain is Large ribosomal subunit protein uL2cz/uL2cy (rpl2-A), found in Zea mays (Maize).